Here is a 901-residue protein sequence, read N- to C-terminus: Protein translocase subunit SecA 1 (901 aa).

Residues Gln87, Gly105–Thr109, and Asp500 contribute to the ATP site. The interval Leu847–Ser901 is disordered. Residues Cys885, Cys887, Cys896, and Cys897 each contribute to the Zn(2+) site.

This sequence belongs to the SecA family. In terms of assembly, monomer and homodimer. Part of the essential Sec protein translocation apparatus which comprises SecA, SecYEG and auxiliary proteins SecDF-YajC and YidC. Zn(2+) is required as a cofactor.

The protein resides in the cell inner membrane. It is found in the cytoplasm. It carries out the reaction ATP + H2O + cellular proteinSide 1 = ADP + phosphate + cellular proteinSide 2.. Its function is as follows. Part of the Sec protein translocase complex. Interacts with the SecYEG preprotein conducting channel. Has a central role in coupling the hydrolysis of ATP to the transfer of proteins into and across the cell membrane, serving both as a receptor for the preprotein-SecB complex and as an ATP-driven molecular motor driving the stepwise translocation of polypeptide chains across the membrane. This chain is Protein translocase subunit SecA 1, found in Magnetococcus marinus (strain ATCC BAA-1437 / JCM 17883 / MC-1).